A 160-amino-acid chain; its full sequence is Large ribosomal subunit protein uL22c (160 aa).

This sequence belongs to the universal ribosomal protein uL22 family. In terms of assembly, part of the 50S ribosomal subunit.

It localises to the plastid. It is found in the chloroplast. Its function is as follows. This protein binds specifically to 23S rRNA. Functionally, the globular domain of the protein is located near the polypeptide exit tunnel on the outside of the subunit, while an extended beta-hairpin is found that lines the wall of the exit tunnel in the center of the 70S ribosome. This is Large ribosomal subunit protein uL22c (rpl22) from Draba nemorosa (Woodland whitlowgrass).